The following is a 319-amino-acid chain: Acetyl-coenzyme A carboxylase carboxyl transferase subunit alpha (319 aa).

The CoA carboxyltransferase C-terminal domain occupies 35-296 (NIDEEVHRLR…KAQLLEDLAD (262 aa)).

Belongs to the AccA family. Acetyl-CoA carboxylase is a heterohexamer composed of biotin carboxyl carrier protein (AccB), biotin carboxylase (AccC) and two subunits each of ACCase subunit alpha (AccA) and ACCase subunit beta (AccD).

Its subcellular location is the cytoplasm. It carries out the reaction N(6)-carboxybiotinyl-L-lysyl-[protein] + acetyl-CoA = N(6)-biotinyl-L-lysyl-[protein] + malonyl-CoA. It participates in lipid metabolism; malonyl-CoA biosynthesis; malonyl-CoA from acetyl-CoA: step 1/1. Functionally, component of the acetyl coenzyme A carboxylase (ACC) complex. First, biotin carboxylase catalyzes the carboxylation of biotin on its carrier protein (BCCP) and then the CO(2) group is transferred by the carboxyltransferase to acetyl-CoA to form malonyl-CoA. This is Acetyl-coenzyme A carboxylase carboxyl transferase subunit alpha from Salmonella arizonae (strain ATCC BAA-731 / CDC346-86 / RSK2980).